Consider the following 171-residue polypeptide: Putative adenylate kinase (171 aa).

ATP is bound by residues glycine 9, glycine 11, lysine 12, threonine 13, and threonine 14. Residues 28 to 51 are NMP; sequence SLGELIRQKGFVLGRDPIRGYLEA. Positions 99–109 are LID; it reads GRGYPEGKVLE. ATP is bound at residue arginine 100.

It belongs to the adenylate kinase family. AK6 subfamily. As to quaternary structure, interacts with uS11. Not a structural component of 40S pre-ribosomes, but transiently interacts with them by binding to uS11.

The enzyme catalyses AMP + ATP = 2 ADP. It carries out the reaction ATP + H2O = ADP + phosphate + H(+). In terms of biological role, broad-specificity nucleoside monophosphate (NMP) kinase that catalyzes the reversible transfer of the terminal phosphate group between nucleoside triphosphates and monophosphates. Also has ATPase activity. Involved in the late maturation steps of the 30S ribosomal particles, specifically 16S rRNA maturation. While NMP activity is not required for ribosome maturation, ATPase activity is. Associates transiently with small ribosomal subunit protein uS11. ATP hydrolysis breaks the interaction with uS11. May temporarily remove uS11 from the ribosome to enable a conformational change of the ribosomal RNA that is needed for the final maturation step of the small ribosomal subunit. In Methanothermobacter thermautotrophicus (strain ATCC 29096 / DSM 1053 / JCM 10044 / NBRC 100330 / Delta H) (Methanobacterium thermoautotrophicum), this protein is Putative adenylate kinase.